Consider the following 215-residue polypeptide: Glutathione S-transferase F10 (215 aa).

The GST N-terminal domain occupies 2–81 (VLTIYAPLFA…YIAEKYRSQG (80 aa)). Residues 11-12 (AS), 39-40 (QR), 52-53 (KI), and 65-66 (ES) contribute to the glutathione site. Residues 88–215 (TIEERGQVEQ…EVSAKYSLPV (128 aa)) form the GST C-terminal domain.

Belongs to the GST superfamily. Phi family. As to quaternary structure, interacts with BAK1. In terms of tissue distribution, expressed in roots, stems, floral buds, mature flowers and leaves.

Its subcellular location is the cytoplasm. The protein resides in the cytosol. It carries out the reaction RX + glutathione = an S-substituted glutathione + a halide anion + H(+). Its function is as follows. In vitro, possesses glutathione S-transferase activity toward 1-chloro-2,4-dinitrobenzene (CDNB) and benzyl isothiocyanate (BITC). May be involved in the conjugation of reduced glutathione to a wide number of exogenous and endogenous hydrophobic electrophiles and have a detoxification role against certain herbicides. This chain is Glutathione S-transferase F10, found in Arabidopsis thaliana (Mouse-ear cress).